Here is a 423-residue protein sequence, read N- to C-terminus: Exodeoxyribonuclease 7 large subunit (423 aa).

Belongs to the XseA family. In terms of assembly, heterooligomer composed of large and small subunits.

It localises to the cytoplasm. The enzyme catalyses Exonucleolytic cleavage in either 5'- to 3'- or 3'- to 5'-direction to yield nucleoside 5'-phosphates.. In terms of biological role, bidirectionally degrades single-stranded DNA into large acid-insoluble oligonucleotides, which are then degraded further into small acid-soluble oligonucleotides. The polypeptide is Exodeoxyribonuclease 7 large subunit (Natranaerobius thermophilus (strain ATCC BAA-1301 / DSM 18059 / JW/NM-WN-LF)).